The primary structure comprises 605 residues: Putative zinc finger CCCH domain-containing protein 57 (605 aa).

3 disordered regions span residues 198–218 (RHTGHESQNDADDAEQHGREV), 238–261 (LLQDDARRRRADAEAEQQGGDGEV), and 375–403 (QASHQDLPLQPPQGFPFQQQPQHDGYQQP). 2 stretches are compositionally biased toward basic and acidic residues: residues 201–218 (GHESQNDADDAEQHGREV) and 238–250 (LLQDDARRRRADA). Residues 389 to 403 (FPFQQQPQHDGYQQP) are compositionally biased toward low complexity. 2 C3H1-type zinc fingers span residues 519-547 (EPKTVMCPDWCRTGHCSSGDGCEYAHSQD) and 557-585 (KYRTEPCRYWLAGKGCWYGDKCRYKQHRL).

This Oryza sativa subsp. japonica (Rice) protein is Putative zinc finger CCCH domain-containing protein 57.